The sequence spans 294 residues: Proteasome subunit beta (294 aa).

Residues 1 to 65 (MTADRPALRT…MESGDLAPHG (65 aa)) constitute a propeptide, removed in mature form; by autocatalysis. T66 (nucleophile) is an active-site residue.

It belongs to the peptidase T1B family. As to quaternary structure, the 20S proteasome core is composed of 14 alpha and 14 beta subunits that assemble into four stacked heptameric rings, resulting in a barrel-shaped structure. The two inner rings, each composed of seven catalytic beta subunits, are sandwiched by two outer rings, each composed of seven alpha subunits. The catalytic chamber with the active sites is on the inside of the barrel. Has a gated structure, the ends of the cylinder being occluded by the N-termini of the alpha-subunits. Is capped by the proteasome-associated ATPase, ARC.

It localises to the cytoplasm. It carries out the reaction Cleavage of peptide bonds with very broad specificity.. It functions in the pathway protein degradation; proteasomal Pup-dependent pathway. Its activity is regulated as follows. The formation of the proteasomal ATPase ARC-20S proteasome complex, likely via the docking of the C-termini of ARC into the intersubunit pockets in the alpha-rings, may trigger opening of the gate for substrate entry. Interconversion between the open-gate and close-gate conformations leads to a dynamic regulation of the 20S proteasome proteolysis activity. In terms of biological role, component of the proteasome core, a large protease complex with broad specificity involved in protein degradation. This chain is Proteasome subunit beta, found in Rhodococcus opacus (strain B4).